The primary structure comprises 42 residues: uncharacterized protein (42 aa).

Residues V18–L38 form a helical membrane-spanning segment.

Its subcellular location is the host membrane. This is an uncharacterized protein from His1 virus (isolate Australia/Victoria) (His1V).